The chain runs to 202 residues: Peptide methionine sulfoxide reductase B1, chloroplastic (202 aa).

The N-terminal 63 residues, 1–63, are a transit peptide targeting the chloroplast; the sequence is MASSTRLTII…SSSPKPDNVQ (63 aa). The disordered stretch occupies residues 48–67; that stretch reads YSMGSSSSSPKPDNVQEAEK. The 123-residue stretch at 75–197 folds into the MsrB domain; that stretch reads ENEWKKRLTP…NSAALKLNAL (123 aa). Residues Cys-114, Cys-117, Cys-163, and Cys-166 each contribute to the Zn(2+) site. Residue Cys-186 is the Nucleophile of the active site.

This sequence belongs to the MsrB Met sulfoxide reductase family. Requires Zn(2+) as cofactor. Expressed at low levels in stems, leaves, floral buds, flowers and siliques (at protein level).

Its subcellular location is the plastid. It localises to the chloroplast. The enzyme catalyses L-methionyl-[protein] + [thioredoxin]-disulfide + H2O = L-methionyl-(R)-S-oxide-[protein] + [thioredoxin]-dithiol. Catalyzes the reduction of methionine sulfoxide (MetSO) to methionine in proteins. Specifically reduces the MetSO R-enantiomer. Plays a protective role against oxidative stress by restoring activity to proteins that have been inactivated by methionine oxidation. May play an essential function in association with MSRB2 in maintaining vegetative growth during environmental constraints, through the preservation of photosynthetic antennae. MSRB1 and MSRB2 account for most of the leaf peptide MSR capacity. The polypeptide is Peptide methionine sulfoxide reductase B1, chloroplastic (Arabidopsis thaliana (Mouse-ear cress)).